Consider the following 361-residue polypeptide: VNQIGSVTESIEAVKAALVSHGAGVAVVGRKINLAGGPSYTVELGRFDGLVSRALYGLSKLPELGTHGLTLICISWALRVMSNVHDFFVHVAAKVESIHQYIESMRYGSLSPTIFDNYSKDCMIAHGAAHFLKXRPPDPAETRGGAVADNGSGAVARMPTLEEYGTNLTKLAEEGKANFDAAMVKLKNFSFILMFGVLGTIISFCLISSGAVLLLKHHVFPDSNINPSSGAAITSGVRGDLRAYVVAYLDPSRTSFTVDNAIYGEIRRTVLAWLIDSGTLQLSEKVLALVLTMVAATVLGVAKSMIKMGQIEVLTGTQGEIRAAEIVVEQLHAESGKPVLVALTGSIDKMTKDNVLNKTCK.

It belongs to the peroxidase family. Partially N-glycosylated.

The protein resides in the secreted. The catalysed reaction is 2 a phenolic donor + H2O2 = 2 a phenolic radical donor + 2 H2O. This is Peroxidase A from Aloe vera (Aloe).